We begin with the raw amino-acid sequence, 470 residues long: Poly(A) polymerase catalytic subunit (470 aa).

Catalysis depends on residues Asp-192 and Asp-194.

The protein belongs to the poxviridae poly(A) polymerase catalytic subunit family. Heterodimer of a large (catalytic) subunit and a small (regulatory) subunit.

It carries out the reaction RNA(n) + ATP = RNA(n)-3'-adenine ribonucleotide + diphosphate. In terms of biological role, polymerase that creates the 3'-poly(A) tail of mRNA's. This chain is Poly(A) polymerase catalytic subunit (PAPL), found in Oryctolagus cuniculus (Rabbit).